A 195-amino-acid chain; its full sequence is ATP-dependent Clp protease proteolytic subunit (195 aa).

The active-site Nucleophile is the S98. H123 is an active-site residue.

This sequence belongs to the peptidase S14 family. Fourteen ClpP subunits assemble into 2 heptameric rings which stack back to back to give a disk-like structure with a central cavity, resembling the structure of eukaryotic proteasomes.

Its subcellular location is the cytoplasm. It catalyses the reaction Hydrolysis of proteins to small peptides in the presence of ATP and magnesium. alpha-casein is the usual test substrate. In the absence of ATP, only oligopeptides shorter than five residues are hydrolyzed (such as succinyl-Leu-Tyr-|-NHMec, and Leu-Tyr-Leu-|-Tyr-Trp, in which cleavage of the -Tyr-|-Leu- and -Tyr-|-Trp bonds also occurs).. Functionally, cleaves peptides in various proteins in a process that requires ATP hydrolysis. Has a chymotrypsin-like activity. Plays a major role in the degradation of misfolded proteins. This chain is ATP-dependent Clp protease proteolytic subunit, found in Thermodesulfovibrio yellowstonii (strain ATCC 51303 / DSM 11347 / YP87).